The primary structure comprises 493 residues: Glutamyl-tRNA(Gln) amidotransferase subunit A (493 aa).

Active-site charge relay system residues include lysine 79 and serine 159. Serine 183 serves as the catalytic Acyl-ester intermediate.

The protein belongs to the amidase family. GatA subfamily. In terms of assembly, heterotrimer of A, B and C subunits.

It catalyses the reaction L-glutamyl-tRNA(Gln) + L-glutamine + ATP + H2O = L-glutaminyl-tRNA(Gln) + L-glutamate + ADP + phosphate + H(+). In terms of biological role, allows the formation of correctly charged Gln-tRNA(Gln) through the transamidation of misacylated Glu-tRNA(Gln) in organisms which lack glutaminyl-tRNA synthetase. The reaction takes place in the presence of glutamine and ATP through an activated gamma-phospho-Glu-tRNA(Gln). The polypeptide is Glutamyl-tRNA(Gln) amidotransferase subunit A (Sinorhizobium fredii (strain NBRC 101917 / NGR234)).